The primary structure comprises 193 residues: 3-isopropylmalate dehydratase small subunit (193 aa).

Belongs to the LeuD family. LeuD type 1 subfamily. As to quaternary structure, heterodimer of LeuC and LeuD.

The catalysed reaction is (2R,3S)-3-isopropylmalate = (2S)-2-isopropylmalate. It functions in the pathway amino-acid biosynthesis; L-leucine biosynthesis; L-leucine from 3-methyl-2-oxobutanoate: step 2/4. Functionally, catalyzes the isomerization between 2-isopropylmalate and 3-isopropylmalate, via the formation of 2-isopropylmaleate. The polypeptide is 3-isopropylmalate dehydratase small subunit (Bacillus cytotoxicus (strain DSM 22905 / CIP 110041 / 391-98 / NVH 391-98)).